The chain runs to 391 residues: Methyltransferase/ribosomally synthesized type I borosin cyclic peptide precursor cmaMA (391 aa).

Positions 1-253 (MDATANPKAG…TISTFYLPPK (253 aa)) are methyltransferase domain. Catalysis depends on residues arginine 72, tyrosine 76, and tyrosine 98. The S-adenosyl-L-methionine site is built by tyrosine 98, histidine 100, valine 103, alanine 130, glutamine 172, alanine 215, serine 246, and threonine 247. Residues 254–373 (APSAKVSLNR…AQLSGALKEG (120 aa)) form a clasp domain region. The precursor leader stretch occupies residues 374-376 (GVP). Residue leucine 382 is modified to N-methylleucine. N-methylphenylalanine occurs at positions 385 and 386. 2 positions are modified to N-methylisoleucine: isoleucine 387 and isoleucine 388.

The protein in the N-terminal section; belongs to the precorrin methyltransferase family. As to quaternary structure, homodimer. In terms of processing, cmaMA automethylates at Leu-382, Phe-385, Phe-386, Ile-387 and Ile-388 before being processed by the prolyloligopeptidase ledP which likely forms a peptidyl ester upon removal of the follower propeptide, which then undergoes macrocyclization with the N-terminus of the modified core peptide. Peptide backbone alpha-N-methylations change the physicochemical properties of amide bonds to provide structural constraints and other favorable characteristics including biological membrane permeability to peptides.

The protein operates within secondary metabolite biosynthesis. In terms of biological role, fusion protein of the methyltransferase cmaM and a type I borosin core peptide; part of the gene cluster that mediates the biosynthesis of a type I borosin, a highly methylated cyclic peptide with potent biological activities. Type I borosins derive from the C-terminus of the fusion protein, and it is the same protein that methylates its own C-terminus using S-adenosyl methionine (SAM). The C-terminus is subsequently cleaved off and macrocyclized by a prolyloligopeptidase to give the final product. The protein is Methyltransferase/ribosomally synthesized type I borosin cyclic peptide precursor cmaMA of Coprinopsis marcescibilis (Agaric fungus).